We begin with the raw amino-acid sequence, 173 residues long: Putative metal-dependent hydrolase BC_2708 (173 aa).

Zn(2+) is bound by residues H65, H156, and H160.

Belongs to the metal hydrolase YfiT family. Homodimer. It depends on Zn(2+) as a cofactor.

Its subcellular location is the cytoplasm. Possible metal-dependent hydrolase. The protein is Putative metal-dependent hydrolase BC_2708 of Bacillus cereus (strain ATCC 14579 / DSM 31 / CCUG 7414 / JCM 2152 / NBRC 15305 / NCIMB 9373 / NCTC 2599 / NRRL B-3711).